The following is a 259-amino-acid chain: Ribonuclease HII (259 aa).

Residues 70–258 (TLIAGIDEVG…VKSLVLGKKE (189 aa)) form the RNase H type-2 domain. Residues Asp-76, Glu-77, and Asp-168 each contribute to the a divalent metal cation site.

The protein belongs to the RNase HII family. The cofactor is Mn(2+). It depends on Mg(2+) as a cofactor.

The protein resides in the cytoplasm. The enzyme catalyses Endonucleolytic cleavage to 5'-phosphomonoester.. In terms of biological role, endonuclease that specifically degrades the RNA of RNA-DNA hybrids. The chain is Ribonuclease HII from Streptococcus pneumoniae serotype 19F (strain G54).